Consider the following 200-residue polypeptide: Small ribosomal subunit protein mS26 (200 aa).

The transit peptide at 1 to 27 (MLRALNRLAARPETRPPTPLLLPVRGR) directs the protein to the mitochondrion. Residues 1-44 (MLRALNRLAARPETRPPTPLLLPVRGRKTRHDPPAKSKVGRVQT) form a disordered region. An N6-acetyllysine modification is found at Lys-159.

This sequence belongs to the mitochondrion-specific ribosomal protein mS26 family. Component of the mitochondrial ribosome small subunit (28S) which comprises a 12S rRNA and about 30 distinct proteins.

It is found in the mitochondrion. The sequence is that of Small ribosomal subunit protein mS26 (Mrps26) from Mus musculus (Mouse).